The following is a 520-amino-acid chain: MHKKSACEREGKELKRDFFNKFNLGTSNFVTPGKQLEYVSECKPDSTAVICLDKEQNCSVITWHQLHVYSSQLAWYLIENEIGPGSIVLTMFPNSIEHIIAVFAIWKAGACYMPMSYKAAESEIREACDTIHPNAAFAECKIPGLKFCLSADEIYEAMEGRSKEMPSDRLANPNMISLSGGTSGKMKFIRQNLPCGLDDETIRSWSLMSGMGFEQRQLLVGPLFHGAPHSAAFNGLFMGNTLVLTRNLCPGNILNMIKKYKIEFIQMVPTLMNRLAKLEGVGKEDFASLKALCHTGGVCSPWLKQIWIDLLGPEKIYEMYSMTECIGLTCIRGDEWVKHPGSIGRPVGDSKVSIRDENGKEVAPFEIGEIYMTAPASYLVTEYINWEPLEVKEGGFRSVGDIGYVDEQGYLYFSDRRSDMLVSGGENVFATEVETALLRYKDILDAVVVGIPDEDLGRRLHAVIETGKEIPAEELKTFLRKYLTPYKIPKTFEFVRSIRRGDNGKADRKRILEDCIARGG.

It belongs to the ATP-dependent AMP-binding enzyme family. In terms of assembly, homodimer. Requires Mg(2+) as cofactor.

It carries out the reaction cholate + ATP + CoA = choloyl-CoA + AMP + diphosphate. The catalysed reaction is deoxycholate + ATP + CoA = deoxycholoyl-CoA + AMP + diphosphate. It catalyses the reaction chenodeoxycholate + ATP + CoA = chenodeoxycholoyl-CoA + AMP + diphosphate. It functions in the pathway lipid metabolism; bile acid biosynthesis. Inhibited by diphosphate. In terms of biological role, functions in the bile acid 7alpha-dehydroxylation pathway, which forms secondary bile acids via the 7alpha-dehydroxylation of primary bile acids, and is carried out by intestinal anaerobic bacteria. Catalyzes the initial step in this pathway, i.e. the ATP-dependent thioesterification of primary bile acids with coenzyme A. Is active with C-24 bile acids with free carboxyl groups such as cholate, deoxycholate and chenodeoxycholate. Produces AMP and pyrophosphate in addition to the bile acid-CoA thioester. The polypeptide is Bile acid--coenzyme A ligase (Clostridium scindens (strain JCM 10418 / VPI 12708)).